Here is a 154-residue protein sequence, read N- to C-terminus: uncharacterized protein (154 aa).

Residues 1–42 constitute a mitochondrion transit peptide; sequence MLRVIWKHSSRVTRSIELSNISTTNHTRSLRRLSWISPRRFY.

The protein localises to the mitochondrion. This is an uncharacterized protein from Saccharomyces cerevisiae (strain ATCC 204508 / S288c) (Baker's yeast).